We begin with the raw amino-acid sequence, 4299 residues long: DNA-dependent protein kinase catalytic subunit (4299 aa).

Residues 551–590 (KDLNSTIKKENNNNNNNKNKNNNNNQTLTKEEISKSIKKL) are a coiled coil. Disordered regions lie at residues 557–577 (IKKENNNNNNNKNKNNNNNQT), 613–633 (DENDNNSNSNSNNNNNNDQDN), 878–917 (NSSDSTSGGDIDIDSGGSMGGGGVVPPPSSSSRHRKMKFK), and 1206–1230 (SSSKNNSNSNSNNNNNNNNNSEDGT). Low complexity-rich tracts occupy residues 562 to 575 (NNNNNNKNKNNNNN), 617 to 631 (NNSNSNSNNNNNNDQ), 878 to 893 (NSSDSTSGGDIDIDSG), and 1206 to 1226 (SSSKNNSNSNSNNNNNNNNNS). Phosphoserine; by autocatalysis is present on Ser-2789. Residues Thr-2814 and Thr-2822 each carry the phosphothreonine; by autocatalysis modification. Low complexity predominate over residues 2832–2867 (SSSQSYGGTNNNTGSSQLSSSSSSSGSQSSSQNNSS). 2 disordered regions span residues 2832–2881 (SSSQ…PKLI) and 3535–3559 (TTSSSPSLSISSSSSPYSSTSSSSQ). The region spanning 3031–3707 (KIKDISLNSN…YFPFKISSEQ (677 aa)) is the FAT domain. The PI3K/PI4K catalytic domain occupies 3887 to 4226 (FDTNVLVMGS…AKKKLELVNP (340 aa)). The G-loop stretch occupies residues 3893–3899 (VMGSLRK). The segment at 4092 to 4100 (GIGDRHLEN) is catalytic loop. The tract at residues 4112–4137 (GIDFGHAFGTATQFLPIPELMPFRLT) is activation loop. The region spanning 4267–4299 (VCSSVKEQIDCLIDQSTDPNILSRAWVGWNGAL) is the FATC domain.

It belongs to the PI3/PI4-kinase family. DNAPK subfamily. May be phosphorylated upon DNA damage. Could be autophosphorylated. Autophosphorylation induces a conformational change that leads to remodeling of the DNA-PK complex, requisite for efficient end processing and DNA repair. In terms of processing, autophosphorylated on Ser-2789, Thr-2814 and Thr-2822. Ser-2789 is a DNA damage-inducible phosphorylation site (inducible with ionizing radiation, IR).

The protein resides in the nucleus. It is found in the nucleolus. The catalysed reaction is L-seryl-[protein] + ATP = O-phospho-L-seryl-[protein] + ADP + H(+). It carries out the reaction L-threonyl-[protein] + ATP = O-phospho-L-threonyl-[protein] + ADP + H(+). Its activity is regulated as follows. Inhibited by wortmannin. Activity of the enzyme seems to be attenuated by autophosphorylation. In terms of biological role, serine/threonine-protein kinase that acts as a molecular sensor for DNA damage. Is recruited to DNA ends by the Ku70/Ku80 heterodimer and is involved in DNA non-homologous end joining (NHEJ) required for double-strand break (DSB) repair and V(D)J recombination. This activity is only apparent when DNA damage is administered in G1 phase of the cell cycle. Required for efficient signaling of DNA double-stranded breaks via phosphorylation of H2AX during G1. This is DNA-dependent protein kinase catalytic subunit (dnapkcs) from Dictyostelium discoideum (Social amoeba).